The chain runs to 192 residues: Orotate phosphoribosyltransferase (192 aa).

A 5-phospho-alpha-D-ribose 1-diphosphate-binding site is contributed by 116–124 (EDIVTTGLS). Orotate-binding residues include T120 and R148.

It belongs to the purine/pyrimidine phosphoribosyltransferase family. PyrE subfamily. Homodimer. It depends on Mg(2+) as a cofactor.

It carries out the reaction orotidine 5'-phosphate + diphosphate = orotate + 5-phospho-alpha-D-ribose 1-diphosphate. It participates in pyrimidine metabolism; UMP biosynthesis via de novo pathway; UMP from orotate: step 1/2. In terms of biological role, catalyzes the transfer of a ribosyl phosphate group from 5-phosphoribose 1-diphosphate to orotate, leading to the formation of orotidine monophosphate (OMP). The chain is Orotate phosphoribosyltransferase from Bartonella quintana (strain Toulouse) (Rochalimaea quintana).